Consider the following 97-residue polypeptide: Co-chaperonin GroES (97 aa).

The protein belongs to the GroES chaperonin family. In terms of assembly, heptamer of 7 subunits arranged in a ring. Interacts with the chaperonin GroEL.

It is found in the cytoplasm. Its function is as follows. Together with the chaperonin GroEL, plays an essential role in assisting protein folding. The GroEL-GroES system forms a nano-cage that allows encapsulation of the non-native substrate proteins and provides a physical environment optimized to promote and accelerate protein folding. GroES binds to the apical surface of the GroEL ring, thereby capping the opening of the GroEL channel. In Edwardsiella ictaluri (strain 93-146), this protein is Co-chaperonin GroES.